We begin with the raw amino-acid sequence, 401 residues long: 8-amino-7-oxononanoate synthase (401 aa).

Substrate is bound at residue R24. Position 111–112 (G111–F112) interacts with pyridoxal 5'-phosphate. H137 is a substrate binding site. 3 residues coordinate pyridoxal 5'-phosphate: S183, H211, and T240. K243 is subject to N6-(pyridoxal phosphate)lysine. T357 provides a ligand contact to substrate.

It belongs to the class-II pyridoxal-phosphate-dependent aminotransferase family. BioF subfamily. As to quaternary structure, homodimer. The cofactor is pyridoxal 5'-phosphate.

It carries out the reaction 6-carboxyhexanoyl-[ACP] + L-alanine + H(+) = (8S)-8-amino-7-oxononanoate + holo-[ACP] + CO2. It functions in the pathway cofactor biosynthesis; biotin biosynthesis. Functionally, catalyzes the decarboxylative condensation of pimeloyl-[acyl-carrier protein] and L-alanine to produce 8-amino-7-oxononanoate (AON), [acyl-carrier protein], and carbon dioxide. The chain is 8-amino-7-oxononanoate synthase from Xylella fastidiosa (strain M23).